Here is a 187-residue protein sequence, read N- to C-terminus: Peptide deformylase (187 aa).

The Fe cation site is built by Cys-114 and His-157. Glu-158 is a catalytic residue. Fe cation is bound at residue His-161.

The protein belongs to the polypeptide deformylase family. Fe(2+) is required as a cofactor.

It catalyses the reaction N-terminal N-formyl-L-methionyl-[peptide] + H2O = N-terminal L-methionyl-[peptide] + formate. Functionally, removes the formyl group from the N-terminal Met of newly synthesized proteins. Requires at least a dipeptide for an efficient rate of reaction. N-terminal L-methionine is a prerequisite for activity but the enzyme has broad specificity at other positions. The sequence is that of Peptide deformylase from Enterococcus faecalis (strain ATCC 700802 / V583).